A 267-amino-acid chain; its full sequence is Heme-containing CO-sensing transcriptional regulator RcoM 2 (267 aa).

The PAS domain occupies 15–86 (RAETFQHKLE…KSRDKLRFLL (72 aa)). 2 residues coordinate heme: histidine 74 and methionine 104. An HTH LytTR-type domain is found at 161-266 (IPVYRKSRVI…TAQLKELLGV (106 aa)).

Requires heme as cofactor.

It is found in the cytoplasm. Its function is as follows. One-component, b-type heme-containing aerobic sensor and transcriptional regulator that responds to CO by activating the expression of the oxidation operon cox. The polypeptide is Heme-containing CO-sensing transcriptional regulator RcoM 2 (rcoM2) (Paraburkholderia xenovorans (strain LB400)).